The primary structure comprises 402 residues: Tryptophan synthase beta chain (402 aa).

At Lys-92 the chain carries N6-(pyridoxal phosphate)lysine.

The protein belongs to the TrpB family. As to quaternary structure, tetramer of two alpha and two beta chains. Requires pyridoxal 5'-phosphate as cofactor.

The catalysed reaction is (1S,2R)-1-C-(indol-3-yl)glycerol 3-phosphate + L-serine = D-glyceraldehyde 3-phosphate + L-tryptophan + H2O. It functions in the pathway amino-acid biosynthesis; L-tryptophan biosynthesis; L-tryptophan from chorismate: step 5/5. Functionally, the beta subunit is responsible for the synthesis of L-tryptophan from indole and L-serine. The chain is Tryptophan synthase beta chain from Staphylococcus epidermidis (strain ATCC 35984 / DSM 28319 / BCRC 17069 / CCUG 31568 / BM 3577 / RP62A).